Reading from the N-terminus, the 364-residue chain is Aminomethyltransferase (364 aa).

This sequence belongs to the GcvT family. In terms of assembly, the glycine cleavage system is composed of four proteins: P, T, L and H.

It carries out the reaction N(6)-[(R)-S(8)-aminomethyldihydrolipoyl]-L-lysyl-[protein] + (6S)-5,6,7,8-tetrahydrofolate = N(6)-[(R)-dihydrolipoyl]-L-lysyl-[protein] + (6R)-5,10-methylene-5,6,7,8-tetrahydrofolate + NH4(+). Its function is as follows. The glycine cleavage system catalyzes the degradation of glycine. This chain is Aminomethyltransferase, found in Shewanella sp. (strain ANA-3).